The sequence spans 203 residues: Ras-related protein Rab-7a (203 aa).

Residues 15 to 22 (GDSGVGKT), 34 to 40 (SNQYKAT), 63 to 67 (DTAGQ), 125 to 128 (NKID), and 157 to 158 (AK) contribute to the GTP site. An Effector region motif is present at residues 37–45 (YKATIGADF). Residues Cys-202 and Cys-203 are each lipidated (S-geranylgeranyl cysteine).

It belongs to the small GTPase superfamily. Rab family.

The protein resides in the late endosome membrane. It is found in the lysosome membrane. Its subcellular location is the cytoplasmic vesicle. The protein localises to the autophagosome membrane. It localises to the lipid droplet. It catalyses the reaction GTP + H2O = GDP + phosphate + H(+). Its function is as follows. Small GTPase which cycles between active GTP-bound and inactive GDP-bound states. In its active state, binds to a variety of effector proteins playing a key role in the regulation of endo-lysosomal trafficking. Governs early-to-late endosomal maturation, microtubule minus-end as well as plus-end directed endosomal migration and positioning, and endosome-lysosome transport through different protein-protein interaction cascades. Involved in lipophagy, a cytosolic lipase-independent autophagic pathway. The sequence is that of Ras-related protein Rab-7a (rab7A) from Dictyostelium discoideum (Social amoeba).